The chain runs to 750 residues: Photosystem I P700 chlorophyll a apoprotein A1 (750 aa).

Transmembrane regions (helical) follow at residues V70–A93, L156–H179, L195–L219, I291–Y309, W346–Y369, L385–V411, A433–H455, and F531–L549. [4Fe-4S] cluster-binding residues include C573 and C582. Transmembrane regions (helical) follow at residues H589 to W610 and L664 to F686. Residue H675 coordinates chlorophyll a'. Residues M683 and Y691 each contribute to the chlorophyll a site. W692 contacts phylloquinone. The chain crosses the membrane as a helical span at residues A724–A744.

Belongs to the PsaA/PsaB family. As to quaternary structure, the PsaA/B heterodimer binds the P700 chlorophyll special pair and subsequent electron acceptors. PSI consists of a core antenna complex that captures photons, and an electron transfer chain that converts photonic excitation into a charge separation. The eukaryotic PSI reaction center is composed of at least 11 subunits. The cofactor is P700 is a chlorophyll a/chlorophyll a' dimer, A0 is one or more chlorophyll a, A1 is one or both phylloquinones and FX is a shared 4Fe-4S iron-sulfur center..

The protein resides in the plastid. Its subcellular location is the chloroplast thylakoid membrane. The catalysed reaction is reduced [plastocyanin] + hnu + oxidized [2Fe-2S]-[ferredoxin] = oxidized [plastocyanin] + reduced [2Fe-2S]-[ferredoxin]. In terms of biological role, psaA and PsaB bind P700, the primary electron donor of photosystem I (PSI), as well as the electron acceptors A0, A1 and FX. PSI is a plastocyanin-ferredoxin oxidoreductase, converting photonic excitation into a charge separation, which transfers an electron from the donor P700 chlorophyll pair to the spectroscopically characterized acceptors A0, A1, FX, FA and FB in turn. Oxidized P700 is reduced on the lumenal side of the thylakoid membrane by plastocyanin. This chain is Photosystem I P700 chlorophyll a apoprotein A1, found in Aethionema grandiflorum (Persian stone-cress).